The chain runs to 337 residues: tRNA N6-adenosine threonylcarbamoyltransferase (337 aa).

Fe cation is bound by residues His114 and His118. Residues 136 to 140, Asp169, Gly182, Asp186, and Asn275 contribute to the substrate site; that span reads LVSGG. Asp301 lines the Fe cation pocket.

The protein belongs to the KAE1 / TsaD family. The cofactor is Fe(2+).

Its subcellular location is the cytoplasm. The catalysed reaction is L-threonylcarbamoyladenylate + adenosine(37) in tRNA = N(6)-L-threonylcarbamoyladenosine(37) in tRNA + AMP + H(+). In terms of biological role, required for the formation of a threonylcarbamoyl group on adenosine at position 37 (t(6)A37) in tRNAs that read codons beginning with adenine. Is involved in the transfer of the threonylcarbamoyl moiety of threonylcarbamoyl-AMP (TC-AMP) to the N6 group of A37, together with TsaE and TsaB. TsaD likely plays a direct catalytic role in this reaction. This is tRNA N6-adenosine threonylcarbamoyltransferase from Streptococcus thermophilus (strain CNRZ 1066).